An 820-amino-acid polypeptide reads, in one-letter code: Leucine--tRNA ligase (820 aa).

Positions 40 to 51 (PYPSGAGLHVGH) match the 'HIGH' region motif. Positions 601 to 605 (KMSKS) match the 'KMSKS' region motif. Residue K604 coordinates ATP.

The protein belongs to the class-I aminoacyl-tRNA synthetase family.

The protein resides in the cytoplasm. It catalyses the reaction tRNA(Leu) + L-leucine + ATP = L-leucyl-tRNA(Leu) + AMP + diphosphate. In Chlamydia pneumoniae (Chlamydophila pneumoniae), this protein is Leucine--tRNA ligase.